A 332-amino-acid chain; its full sequence is Lipoyl synthase (332 aa).

C55, C60, C66, C81, C85, C88, and S292 together coordinate [4Fe-4S] cluster. The region spanning W67–L281 is the Radical SAM core domain.

Belongs to the radical SAM superfamily. Lipoyl synthase family. [4Fe-4S] cluster serves as cofactor.

It localises to the cytoplasm. It catalyses the reaction [[Fe-S] cluster scaffold protein carrying a second [4Fe-4S](2+) cluster] + N(6)-octanoyl-L-lysyl-[protein] + 2 oxidized [2Fe-2S]-[ferredoxin] + 2 S-adenosyl-L-methionine + 4 H(+) = [[Fe-S] cluster scaffold protein] + N(6)-[(R)-dihydrolipoyl]-L-lysyl-[protein] + 4 Fe(3+) + 2 hydrogen sulfide + 2 5'-deoxyadenosine + 2 L-methionine + 2 reduced [2Fe-2S]-[ferredoxin]. It participates in protein modification; protein lipoylation via endogenous pathway; protein N(6)-(lipoyl)lysine from octanoyl-[acyl-carrier-protein]: step 2/2. In terms of biological role, catalyzes the radical-mediated insertion of two sulfur atoms into the C-6 and C-8 positions of the octanoyl moiety bound to the lipoyl domains of lipoate-dependent enzymes, thereby converting the octanoylated domains into lipoylated derivatives. This Beutenbergia cavernae (strain ATCC BAA-8 / DSM 12333 / CCUG 43141 / JCM 11478 / NBRC 16432 / NCIMB 13614 / HKI 0122) protein is Lipoyl synthase.